Reading from the N-terminus, the 473-residue chain is Transposase for insertion sequence element IS1151 (473 aa).

It belongs to the transposase 11 family.

Its function is as follows. Involved in the transposition of the insertion sequence. This is Transposase for insertion sequence element IS1151 (tnp) from Clostridium perfringens.